Reading from the N-terminus, the 378-residue chain is Pulmonary surfactant-associated protein D (378 aa).

A signal peptide spans 1 to 20; sequence MLLLPLSVLILLTQPPRSLG. An S-nitrosocysteine mark is found at Cys-35 and Cys-40. Positions 43-221 are disordered; sequence MENGLPGRDG…ERGAKGESGL (179 aa). One can recognise a Collagen-like domain in the interval 46–222; the sequence is GLPGRDGRDG…RGAKGESGLP (177 aa). Over residues 50 to 65 the composition is skewed to basic and acidic residues; it reads RDGRDGREGPRGEKGD. 4-hydroxyproline is present on Pro-78. Lys-87 carries the post-translational modification 5-hydroxylysine. Asn-90 carries N-linked (GlcNAc...) asparagine glycosylation. 4-hydroxyproline is present on Pro-96. Lys-99 is modified (5-hydroxylysine). Over residues 105 to 114 the composition is skewed to pro residues; it reads CGPPGPPGIP. Positions 137–146 are enriched in low complexity; sequence PKGETGPKGE. A 4-hydroxyproline mark is found at Pro-171 and Pro-177. The segment covering 173–197 has biased composition (low complexity); that stretch reads ERGAPGSAGAAGPAGATGPQGPSGA. Over residues 204–216 the composition is skewed to basic and acidic residues; sequence KGDRGPPGERGAK. Residues 223-254 are a coiled coil; sequence GITALRQQVETLQGQVQRLQKAFSQYKKVELF. Residues 260-378 enclose the C-type lectin domain; sequence VGEKIFKTGG…GELRLVICEF (119 aa). 2 disulfides stabilise this stretch: Cys-281-Cys-376 and Cys-354-Cys-368. The N-linked (GlcNAc...) asparagine glycan is linked to Asn-323.

This sequence belongs to the SFTPD family. As to quaternary structure, oligomeric complex of 4 set of homotrimers. Post-translationally, hydroxylation on proline residues within the sequence motif, GXPG, is most likely to be 4-hydroxy as this fits the requirement for 4-hydroxylation in vertebrates. S-nitrosylation at Cys-35 and Cys-40 alters the quaternary structure which results in a pro-inflammatory chemoattractive signaling activity with macrophages.

The protein resides in the secreted. The protein localises to the extracellular space. It localises to the extracellular matrix. Its subcellular location is the surface film. Its function is as follows. Contributes to the lung's defense against inhaled microorganisms, organic antigens and toxins. Interacts with compounds such as bacterial lipopolysaccharides, oligosaccharides and fatty acids and modulates leukocyte action in immune response. May participate in the extracellular reorganization or turnover of pulmonary surfactant. Binds strongly maltose residues and to a lesser extent other alpha-glucosyl moieties. In Sus scrofa (Pig), this protein is Pulmonary surfactant-associated protein D (SFTPD).